Reading from the N-terminus, the 287-residue chain is Survival motor neuron protein (287 aa).

The tract at residues Met1–Asp28 is disordered. The P1 (binding site for GEMIN2) stretch occupies residues Pro9–Asp40. Thr21 is modified (phosphothreonine). Residues Ser24 and Ser27 each carry the phosphoserine modification. A Glycyl lysine isopeptide (Lys-Gly) (interchain with G-Cter in SUMO2) cross-link involves residue Lys47. Disordered regions lie at residues Lys51–Gln86 and Asn149–His221. Residues Gly64–Arg77 are compositionally biased toward basic residues. Position 65 is a phosphothreonine (Thr65). Residue Thr80 is modified to Phosphothreonine; by PKA. Residues Gln86–Ile146 enclose the Tudor domain. Residues Asn92–Lys204 are required for interaction with RPP20/POP7. Residues Asn149–Ser160 show a composition bias toward low complexity. Over residues Ser167–Arg179 the composition is skewed to polar residues. Lys204 is covalently cross-linked (Glycyl lysine isopeptide (Lys-Gly) (interchain with G-Cter in SUMO2)). Residues Gly211–His221 show a composition bias toward pro residues. The segment at Pro234–Trp261 is P2 (binding site for SM B). Residues Gly273–Asn287 are required for interaction with SYNCRIP.

This sequence belongs to the SMN family. Homooligomer; may form higher order homooligomers in the dimer to octamer range. Part of the core SMN complex that contains SMN1, GEMIN2/SIP1, DDX20/GEMIN3, GEMIN4, GEMIN5, GEMIN6, GEMIN7, GEMIN8 and STRAP/UNRIP. Part of the SMN-Sm complex that contains SMN1, GEMIN2/SIP1, DDX20/GEMIN3, GEMIN4, GEMIN5, GEMIN6, GEMIN7, GEMIN8, STRAP/UNRIP and the Sm proteins SNRPB, SNRPD1, SNRPD2, SNRPD3, SNRPE, SNRPF and SNRPG. Component of an import snRNP complex composed of KPNB1, RNUT1, SMN1 and ZNF259. Interacts with DDX20, FBL, NOLA1, RNUT1, SYNCRIP and with several spliceosomal snRNP core Sm proteins, including SNRPB, SNRPD1, SNRPD2, SNRPD3, SNRPE and ILF3. Interacts with GEMIN2; the interaction is direct. Interacts with GEMIN3; the interaction is direct. Interacts with GEMIN8; the interaction is direct. Interacts with SNRPB; the interaction is direct. Interacts (via Tudor domain) with SNRPD1 (via C-terminus); the interaction is direct. Interacts with SNRPD2; the interaction is direct. Interacts (via Tudor domain) with SNRPD3 (via C-terminus); the interaction is direct. Interacts with SNRPE; the interaction is direct. Interacts with OSTF1, LSM10, LSM11 and RPP20/POP7. Interacts (via C-terminal region) with ZPR1 (via C-terminal region). Interacts (via Tudor domain) with COIL. Interacts with SETX; recruits SETX to POLR2A. Interacts with POLR2A (via the C-terminal domain (CTD)). Interacts with PRMT5. Interacts with XRN2. Interacts (via C-terminus) with FMR1 (via C-terminus); the interaction is direct and occurs in a RNA-independent manner. Interacts (via Tudor domain) with SF3B2 ('Arg-508'-methylated form). Interacts with WRAP53/TCAB1. Interacts (via Tudor domain) with ELAVL4 in an RNA-independent manner; the interaction is required for localization of ELAVL4 to RNA granules. Interacts with FRG1.

The protein resides in the nucleus. It is found in the gem. The protein localises to the cajal body. Its subcellular location is the cytoplasm. It localises to the cytoplasmic granule. The protein resides in the perikaryon. It is found in the cell projection. The protein localises to the neuron projection. Its subcellular location is the axon. It localises to the myofibril. The protein resides in the sarcomere. It is found in the z line. Its function is as follows. The SMN complex catalyzes the assembly of small nuclear ribonucleoproteins (snRNPs), the building blocks of the spliceosome, and thereby plays an important role in the splicing of cellular pre-mRNAs. Most spliceosomal snRNPs contain a common set of Sm proteins SNRPB, SNRPD1, SNRPD2, SNRPD3, SNRPE, SNRPF and SNRPG that assemble in a heptameric protein ring on the Sm site of the small nuclear RNA to form the core snRNP (Sm core). In the cytosol, the Sm proteins SNRPD1, SNRPD2, SNRPE, SNRPF and SNRPG are trapped in an inactive 6S pICln-Sm complex by the chaperone CLNS1A that controls the assembly of the core snRNP. To assemble core snRNPs, the SMN complex accepts the trapped 5Sm proteins from CLNS1A forming an intermediate. Binding of snRNA inside 5Sm ultimately triggers eviction of the SMN complex, thereby allowing binding of SNRPD3 and SNRPB to complete assembly of the core snRNP. Within the SMN complex, SMN1 acts as a structural backbone and together with GEMIN2 it gathers the Sm complex subunits. Ensures the correct splicing of U12 intron-containing genes that may be important for normal motor and proprioceptive neurons development. Also required for resolving RNA-DNA hybrids created by RNA polymerase II, that form R-loop in transcription terminal regions, an important step in proper transcription termination. May also play a role in the metabolism of small nucleolar ribonucleoprotein (snoRNPs). The polypeptide is Survival motor neuron protein (SMN1) (Bos taurus (Bovine)).